The primary structure comprises 310 residues: Upstream stimulatory factor 1 (310 aa).

Residues 1 to 17 (MKGQQKTAETEEGTVQI) are compositionally biased toward polar residues. Disordered regions lie at residues 1–26 (MKGQ…ATGE) and 171–209 (QGGS…EVER). A compositionally biased stretch (basic and acidic residues) spans 194–209 (TTRDEKRRAQHNEVER). Residues 199–254 (KRRAQHNEVERRRRDKINNWIVQLSKIIPDCSMESTKSGQSKGGILSKACDYIQEL) enclose the bHLH domain. The leucine-zipper stretch occupies residues 271–292 (LQLDNDVLRQQVEDLKNKNLLL). Residue K306 forms a Glycyl lysine isopeptide (Lys-Gly) (interchain with G-Cter in SUMO2) linkage.

As to quaternary structure, efficient DNA binding requires dimerization with another bHLH protein. Binds DNA as a homodimer or a heterodimer (USF1/USF2).

Its subcellular location is the nucleus. In terms of biological role, transcription factor that binds to a symmetrical DNA sequence (E-boxes) (5'-CACGTG-3') that is found in a variety of viral and cellular promoters. Regulates the expression of the surfactant protein-A (SP-A) gene. This is Upstream stimulatory factor 1 (USF1) from Oryctolagus cuniculus (Rabbit).